The following is a 624-amino-acid chain: Chaperone protein HtpG (624 aa).

Residues 1–336 (MKGQETRGFQ…SSDLPLNVSR (336 aa)) are a; substrate-binding. Residues 337-552 (EILQDSTVTR…ADEMSTQMAK (216 aa)) form a b region. Residues 553–624 (LFAAAGQKVP…IRRMNQLLVS (72 aa)) form a c region.

The protein belongs to the heat shock protein 90 family. Homodimer.

The protein resides in the cytoplasm. In terms of biological role, molecular chaperone. Has ATPase activity. In Shigella boydii serotype 4 (strain Sb227), this protein is Chaperone protein HtpG.